Consider the following 296-residue polypeptide: Formamidopyrimidine-DNA glycosylase (296 aa).

Catalysis depends on proline 2, which acts as the Schiff-base intermediate with DNA. Glutamate 3 functions as the Proton donor in the catalytic mechanism. The active-site Proton donor; for beta-elimination activity is lysine 61. Residues histidine 104, arginine 123, and lysine 169 each contribute to the DNA site. The segment at 255–289 (DAYGREGEPCRRCGAIMRRDKFMNRSSFYCPRCQP) adopts an FPG-type zinc-finger fold. The active-site Proton donor; for delta-elimination activity is arginine 279.

Belongs to the FPG family. Monomer. Zn(2+) is required as a cofactor.

It carries out the reaction Hydrolysis of DNA containing ring-opened 7-methylguanine residues, releasing 2,6-diamino-4-hydroxy-5-(N-methyl)formamidopyrimidine.. The enzyme catalyses 2'-deoxyribonucleotide-(2'-deoxyribose 5'-phosphate)-2'-deoxyribonucleotide-DNA = a 3'-end 2'-deoxyribonucleotide-(2,3-dehydro-2,3-deoxyribose 5'-phosphate)-DNA + a 5'-end 5'-phospho-2'-deoxyribonucleoside-DNA + H(+). Its function is as follows. Involved in base excision repair of DNA damaged by oxidation or by mutagenic agents. Acts as a DNA glycosylase that recognizes and removes damaged bases. Has a preference for oxidized purines, such as 7,8-dihydro-8-oxoguanine (8-oxoG). Has AP (apurinic/apyrimidinic) lyase activity and introduces nicks in the DNA strand. Cleaves the DNA backbone by beta-delta elimination to generate a single-strand break at the site of the removed base with both 3'- and 5'-phosphates. The protein is Formamidopyrimidine-DNA glycosylase of Mycobacterium sp. (strain KMS).